We begin with the raw amino-acid sequence, 493 residues long: Inosine-5'-monophosphate dehydrogenase (493 aa).

2 CBS domains span residues Val-97–Ile-155 and Met-159–Glu-219. Residues Asp-253 and Gly-303 to Gly-305 contribute to the NAD(+) site. K(+) contacts are provided by Gly-305 and Gly-307. An IMP-binding site is contributed by Ser-308. Cys-310 serves as a coordination point for K(+). Cys-310 functions as the Thioimidate intermediate in the catalytic mechanism. IMP is bound by residues Asp-343 to Gly-345, Gly-366 to Ser-367, and Tyr-390 to Gly-394. Arg-406 (proton acceptor) is an active-site residue. Glu-421 is an IMP binding site. K(+)-binding residues include Glu-475, Ser-476, and His-477.

Belongs to the IMPDH/GMPR family. Homotetramer. The cofactor is K(+).

It catalyses the reaction IMP + NAD(+) + H2O = XMP + NADH + H(+). The protein operates within purine metabolism; XMP biosynthesis via de novo pathway; XMP from IMP: step 1/1. Mycophenolic acid (MPA) is a non-competitive inhibitor that prevents formation of the closed enzyme conformation by binding to the same site as the amobile flap. In contrast, mizoribine monophosphate (MZP) is a competitive inhibitor that induces the closed conformation. MPA is a potent inhibitor of mammalian IMPDHs but a poor inhibitor of the bacterial enzymes. MZP is a more potent inhibitor of bacterial IMPDH. Functionally, catalyzes the conversion of inosine 5'-phosphate (IMP) to xanthosine 5'-phosphate (XMP), the first committed and rate-limiting step in the de novo synthesis of guanine nucleotides, and therefore plays an important role in the regulation of cell growth. In Streptococcus pyogenes serotype M1, this protein is Inosine-5'-monophosphate dehydrogenase.